The sequence spans 163 residues: Zinc finger A20 and AN1 domain-containing stress-associated protein 3 (163 aa).

Residues 7–41 (LQEPRLCANNCGFFGSTATQNLCSKCFRDLQHQEQ) form an A20-type zinc finger. Zn(2+) is bound by residues C13, C17, C29, and C32. Residues 57-101 (VGAAASSSVSPPPPPPADSKEIVEAKSEKRAAAEPEEADGPPQDP) are disordered. The span at 74 to 89 (DSKEIVEAKSEKRAAA) shows a compositional bias: basic and acidic residues. Residues 98 to 144 (PQDPKRCLTCRRRVGITGFRCRCGFVFCGTHRYAEQHECSFDFKRMG) form an AN1-type zinc finger. Zn(2+) is bound by residues C104, C107, C118, C120, C125, H128, H134, and C136.

May be involved in environmental stress response. This Arabidopsis thaliana (Mouse-ear cress) protein is Zinc finger A20 and AN1 domain-containing stress-associated protein 3 (SAP3).